The chain runs to 64 residues: Alpha-conotoxin-like Lt1.3 (64 aa).

An N-terminal signal peptide occupies residues 1 to 21; sequence MGMRMMFTMFLLVVLTTTVVS. Positions 22 to 45 are excised as a propeptide; it reads FNLDRESNHENRRTSNQITRGMWD. Cystine bridges form between Cys47–Cys53 and Cys48–Cys61. Positions 49–51 are lacks the Ser-Xaa-Pro motif that is crucial for potent interaction with nAChR; that stretch reads DDP.

Belongs to the conotoxin A superfamily. Expressed by the venom duct.

It localises to the secreted. Functionally, alpha-conotoxins act on postsynaptic membranes, they bind to the nicotinic acetylcholine receptors (nAChR) and thus inhibit them. Has possibly a distinct nAChR binding mode from other alpha-conotoxins, due to a different three residue motif (lacks the Ser-Xaa-Pro motif). This is Alpha-conotoxin-like Lt1.3 from Conus litteratus (Lettered cone).